A 143-amino-acid chain; its full sequence is Large ribosomal subunit protein uL16 (143 aa).

Belongs to the universal ribosomal protein uL16 family. As to quaternary structure, part of the 50S ribosomal subunit.

In terms of biological role, binds 23S rRNA and is also seen to make contacts with the A and possibly P site tRNAs. This is Large ribosomal subunit protein uL16 from Oenococcus oeni (strain ATCC BAA-331 / PSU-1).